A 342-amino-acid polypeptide reads, in one-letter code: Isopentenyl-diphosphate delta-isomerase (342 aa).

11–12 (RK) serves as a coordination point for substrate. Residues Ser68, 69–71 (SMT), Ser99, and Asn127 each bind FMN. Residue 99–101 (SMR) participates in substrate binding. A Mg(2+)-binding site is contributed by Glu163. FMN is bound by residues Lys194, Thr224, and 295–296 (AG).

It belongs to the IPP isomerase type 2 family. Homooctamer. Dimer of tetramers. It depends on FMN as a cofactor. The cofactor is NADPH. Requires Mg(2+) as cofactor.

It localises to the cytoplasm. It carries out the reaction isopentenyl diphosphate = dimethylallyl diphosphate. Involved in the biosynthesis of isoprenoids. Catalyzes the 1,3-allylic rearrangement of the homoallylic substrate isopentenyl (IPP) to its allylic isomer, dimethylallyl diphosphate (DMAPP). This is Isopentenyl-diphosphate delta-isomerase from Rickettsia prowazekii (strain Madrid E).